The sequence spans 316 residues: UPF0324 membrane protein SO_4708 (316 aa).

The next 9 helical transmembrane spans lie at 61–80 (LLSYSIIGLGFGINLTAAIE), 85–107 (NLGLIIGSIIFTLILGFIVTRAL), 114–136 (GHLIASGTAICGGSAIAAVAPAV), 146–168 (ALACVFVLNSVALFLFPALGHLL), 175–197 (FGVWSAIAIHDTSSVVGAASAYG), 207–226 (IKLARALWIIPIALVSALIF), 233–252 (LNLPYFIGFYCLAIAIAHWL), 262–281 (LFMVSKHTLVLCLFLIGAGI), and 293–315 (PLLLGVILWMAIGVTSLAYILYF).

The protein belongs to the UPF0324 family.

It is found in the cell membrane. The sequence is that of UPF0324 membrane protein SO_4708 from Shewanella oneidensis (strain ATCC 700550 / JCM 31522 / CIP 106686 / LMG 19005 / NCIMB 14063 / MR-1).